A 168-amino-acid polypeptide reads, in one-letter code: Cyclic pyranopterin monophosphate synthase (168 aa).

Substrate contacts are provided by residues 81-83 (LCH) and 117-118 (ME). The active site involves D132.

The protein belongs to the MoaC family. Homohexamer; trimer of dimers.

The catalysed reaction is (8S)-3',8-cyclo-7,8-dihydroguanosine 5'-triphosphate = cyclic pyranopterin phosphate + diphosphate. It participates in cofactor biosynthesis; molybdopterin biosynthesis. In terms of biological role, catalyzes the conversion of (8S)-3',8-cyclo-7,8-dihydroguanosine 5'-triphosphate to cyclic pyranopterin monophosphate (cPMP). This Deinococcus radiodurans (strain ATCC 13939 / DSM 20539 / JCM 16871 / CCUG 27074 / LMG 4051 / NBRC 15346 / NCIMB 9279 / VKM B-1422 / R1) protein is Cyclic pyranopterin monophosphate synthase.